An 87-amino-acid chain; its full sequence is Serine protease inhibitor Kazal-type 12 (87 aa).

The first 22 residues, 1 to 22 (MKPAGAFLLLISLACLFLSVDA), serve as a signal peptide directing secretion. Residues 26–87 (GGFQAFCSNY…KLGFKHEGKC (62 aa)) enclose the Kazal-like domain. 3 disulfide bridges follow: C32-C68, C46-C65, and C54-C87.

In terms of tissue distribution, expressed in epydiymis, in the caput.

It is found in the secreted. Its function is as follows. Inhibits trypsin. The sequence is that of Serine protease inhibitor Kazal-type 12 (Spink12) from Mus musculus (Mouse).